Consider the following 336-residue polypeptide: MIREAIYEIVNRNNLTIDKTKEVMNRIMDGGATDAQIASFLTSLRLKGETIEEITACAMVMREKCQKLNPEFDVLDIVGTGGDELATFNISTISSFIIAAAGVPVAKHGNRSVSSKCGSADLLEVLGVNIMLTPQQCEAILKKVGMCFLMAQTFHSSMKYVAKVRKELGIRTIFNILGPLANPAKASYELIGVYDENLVEPIASVLVNLGVKRAMVVHGHDGLDEITLSDTTTICEVNRGRLNSFFITPEQFGLKRCSLSELIGGTPQENREIALNILNGEQGAKRDTVVLNSAVCLYMFYDNMTLKQCLRMAQDMIDSKKALNKLDEFIKASHET.

Residues G79, 82–83 (GD), T87, 89–92 (NIST), 107–115 (KHGNRSVSS), and S119 each bind 5-phospho-alpha-D-ribose 1-diphosphate. G79 contacts anthranilate. Position 91 (S91) interacts with Mg(2+). N110 provides a ligand contact to anthranilate. R165 contributes to the anthranilate binding site. Mg(2+)-binding residues include D224 and E225.

The protein belongs to the anthranilate phosphoribosyltransferase family. As to quaternary structure, homodimer. It depends on Mg(2+) as a cofactor.

It catalyses the reaction N-(5-phospho-beta-D-ribosyl)anthranilate + diphosphate = 5-phospho-alpha-D-ribose 1-diphosphate + anthranilate. It participates in amino-acid biosynthesis; L-tryptophan biosynthesis; L-tryptophan from chorismate: step 2/5. Functionally, catalyzes the transfer of the phosphoribosyl group of 5-phosphorylribose-1-pyrophosphate (PRPP) to anthranilate to yield N-(5'-phosphoribosyl)-anthranilate (PRA). This chain is Anthranilate phosphoribosyltransferase, found in Endomicrobium trichonymphae.